A 699-amino-acid chain; its full sequence is Polyribonucleotide nucleotidyltransferase (699 aa).

Mg(2+) is bound by residues Asp-485 and Asp-491. The region spanning 552-611 is the KH domain; the sequence is PRITTIKINPEKIRDVIGKGGAVIRALTEETGTTIELEDDGTVKIASSNGEATKEAIRRI. The S1 motif domain maps to 621-689; sequence GRIYNGKVIR…RQGRVRLSIK (69 aa).

This sequence belongs to the polyribonucleotide nucleotidyltransferase family. Component of the RNA degradosome, which is a multiprotein complex involved in RNA processing and mRNA degradation. The cofactor is Mg(2+).

It localises to the cytoplasm. It catalyses the reaction RNA(n+1) + phosphate = RNA(n) + a ribonucleoside 5'-diphosphate. Its function is as follows. Involved in mRNA degradation. Catalyzes the phosphorolysis of single-stranded polyribonucleotides processively in the 3'- to 5'-direction. This Shewanella sp. (strain MR-4) protein is Polyribonucleotide nucleotidyltransferase.